Reading from the N-terminus, the 23-residue chain is Septenin 2d (23 aa).

As to expression, expressed in skin glands.

The protein localises to the secreted. Functionally, may act as an antimicrobial peptide. The chain is Septenin 2d from Osteopilus septentrionalis (Cuban treefrog).